Consider the following 305-residue polypeptide: Protoheme IX farnesyltransferase (305 aa).

9 helical membrane passes run 31-51 (VMSL…YSVH), 52-72 (PFIA…AGAI), 96-118 (VIES…FFMA), 123-145 (LLAS…IWLK), 151-171 (NIVI…AAVS), 179-199 (IILF…LALF), 225-245 (ILIY…IGMN), 247-267 (FIYL…AGSL), and 281-301 (FAYS…TNTI).

The protein belongs to the UbiA prenyltransferase family. Protoheme IX farnesyltransferase subfamily.

Its subcellular location is the cell membrane. It carries out the reaction heme b + (2E,6E)-farnesyl diphosphate + H2O = Fe(II)-heme o + diphosphate. Its pathway is porphyrin-containing compound metabolism; heme O biosynthesis; heme O from protoheme: step 1/1. Converts heme B (protoheme IX) to heme O by substitution of the vinyl group on carbon 2 of heme B porphyrin ring with a hydroxyethyl farnesyl side group. This is Protoheme IX farnesyltransferase from Rickettsia africae (strain ESF-5).